The sequence spans 251 residues: 1-(5-phosphoribosyl)-5-[(5-phosphoribosylamino)methylideneamino] imidazole-4-carboxamide isomerase (251 aa).

The active-site Proton acceptor is Asp8. The Proton donor role is filled by Asp131.

It belongs to the HisA/HisF family.

The protein localises to the cytoplasm. It carries out the reaction 1-(5-phospho-beta-D-ribosyl)-5-[(5-phospho-beta-D-ribosylamino)methylideneamino]imidazole-4-carboxamide = 5-[(5-phospho-1-deoxy-D-ribulos-1-ylimino)methylamino]-1-(5-phospho-beta-D-ribosyl)imidazole-4-carboxamide. The protein operates within amino-acid biosynthesis; L-histidine biosynthesis; L-histidine from 5-phospho-alpha-D-ribose 1-diphosphate: step 4/9. The chain is 1-(5-phosphoribosyl)-5-[(5-phosphoribosylamino)methylideneamino] imidazole-4-carboxamide isomerase from Burkholderia cenocepacia (strain ATCC BAA-245 / DSM 16553 / LMG 16656 / NCTC 13227 / J2315 / CF5610) (Burkholderia cepacia (strain J2315)).